A 1214-amino-acid chain; its full sequence is Delta-latroinsectotoxin-Lt1a (1214 aa).

A helix H2 is the probable transmembrane region of the tetrameric pore inserted in the target cell membrane region spans residues 64–89 (IGSIPVIGEVVGIVTAPIAIVSHITS). A helix H8 is the probable transmembrane region of the tetrameric pore inserted in the target cell membrane region spans residues 250–269 (ALYALFYGTQTYAAVMFFLL). 15 ANK repeats span residues 464–497 (DIHRDLYDAALNINKLKAVDEATTLIEKGADIEA), 501–532 (NDRSAMHAVAYRGNNKIALRFLLKNQSIDIEL), 536–565 (NGFTPLHIAAEAGQAGFVKLLINHGADVNA), 570–600 (TNLTPLHLATRSGFSKTVRNLLESPNIKVNE), 604–633 (DGFTPLHTAVMSTYMVVDALLNHPDIDKNA), 637–666 (SGLTPFHLAIINESQEVAESLVESNADLNI), 670–699 (NHMAPIHFAASMGSIKMLRYLISIKDKVSI), 706–734 (NNWTPLHFAIYFKKEDAAKELLKQDDINL), 740–769 (GNLTVLHLAVSTGQINIIKELLKRGSNIEE), 773–802 (EGYTSLHIAAMRKEPEIAVVLIENGADIEA), 806–835 (DNLTPLHSAAKIGRKSTVLYLLEKGADIGA), 839–868 (DGSTALHLAVSGRKMKTVETLLNKGANLKE), 872–901 (NKYLPIHKAIINDDLDMVRLFLEKDPSLKD), 906–936 (EGRTSIMLIVQKLLLELYNYFINNYAETLDE), and 966–994 (VKPTILVTIKLMEYCLKKLREESGAPEGS). The propeptide at 1020–1214 (IVKETNSRYL…IDVHQKMFLR (195 aa)) is C-terminal domain cleavage is required for toxin activation.

Belongs to the cationic peptide 01 (latrotoxin) family. 04 (delta-latroinsectotoxin) subfamily. Homotetramer in membrane. As to expression, expressed by the venom gland.

The protein resides in the secreted. It localises to the target cell membrane. Its function is as follows. Insecticidal presynaptic neurotoxin that induces massive neurotransmitter release at insect (but not vertebrate) neuromuscular junctions. Native toxin forms cation-permeable pores (with high permeability to calcium) in lipid membranes locust muscle membrane and artificial lipid bilayers. May bind to insect neurexin-1 homolog, insect adhesion G protein-coupled receptor L1 homolog, and insect receptor-type tyrosine-protein phosphatase S homolog, and induces neurotransmitter exocytosis both by forming tetrameric pores in membranes and signaling via G protein-coupled receptor. Oligomerization is a process independent of divalent cations. This is Delta-latroinsectotoxin-Lt1a from Latrodectus tredecimguttatus (Mediterranean black widow spider).